We begin with the raw amino-acid sequence, 330 residues long: Biotin synthase (330 aa).

One can recognise a Radical SAM core domain in the interval 53-276 (NNIRLNVLLS…VFPFKELRLS (224 aa)). [4Fe-4S] cluster-binding residues include Cys-68, Cys-72, and Cys-75. Cys-112, Cys-144, Cys-204, and Arg-274 together coordinate [2Fe-2S] cluster.

The protein belongs to the radical SAM superfamily. Biotin synthase family. In terms of assembly, homodimer. [4Fe-4S] cluster is required as a cofactor. Requires [2Fe-2S] cluster as cofactor.

The enzyme catalyses (4R,5S)-dethiobiotin + (sulfur carrier)-SH + 2 reduced [2Fe-2S]-[ferredoxin] + 2 S-adenosyl-L-methionine = (sulfur carrier)-H + biotin + 2 5'-deoxyadenosine + 2 L-methionine + 2 oxidized [2Fe-2S]-[ferredoxin]. It functions in the pathway cofactor biosynthesis; biotin biosynthesis; biotin from 7,8-diaminononanoate: step 2/2. Functionally, catalyzes the conversion of dethiobiotin (DTB) to biotin by the insertion of a sulfur atom into dethiobiotin via a radical-based mechanism. In Streptococcus agalactiae serotype III (strain NEM316), this protein is Biotin synthase.